The primary structure comprises 455 residues: Bifunctional protein GlmU (455 aa).

The segment at 1–230 (MANRFAVILA…FDETIGINDR (230 aa)) is pyrophosphorylase. UDP-N-acetyl-alpha-D-glucosamine-binding positions include 9–12 (LAAG), Lys23, Gln73, and 78–79 (GT). Asp103 lines the Mg(2+) pocket. Residues Gly140, Glu155, Asn170, and Asn228 each contribute to the UDP-N-acetyl-alpha-D-glucosamine site. Asn228 lines the Mg(2+) pocket. The tract at residues 231–251 (IALAEAEKIMKKRINEQHMRN) is linker. An N-acetyltransferase region spans residues 252 to 455 (GVSIIDPEQT…KEEYASKFKK (204 aa)). Arg333 and Lys351 together coordinate UDP-N-acetyl-alpha-D-glucosamine. His363 (proton acceptor) is an active-site residue. 2 residues coordinate UDP-N-acetyl-alpha-D-glucosamine: Tyr366 and Asn377. Acetyl-CoA is bound by residues 386 to 387 (NY), Ala423, and Arg440.

This sequence in the N-terminal section; belongs to the N-acetylglucosamine-1-phosphate uridyltransferase family. It in the C-terminal section; belongs to the transferase hexapeptide repeat family. As to quaternary structure, homotrimer. Requires Mg(2+) as cofactor.

Its subcellular location is the cytoplasm. The enzyme catalyses alpha-D-glucosamine 1-phosphate + acetyl-CoA = N-acetyl-alpha-D-glucosamine 1-phosphate + CoA + H(+). The catalysed reaction is N-acetyl-alpha-D-glucosamine 1-phosphate + UTP + H(+) = UDP-N-acetyl-alpha-D-glucosamine + diphosphate. The protein operates within nucleotide-sugar biosynthesis; UDP-N-acetyl-alpha-D-glucosamine biosynthesis; N-acetyl-alpha-D-glucosamine 1-phosphate from alpha-D-glucosamine 6-phosphate (route II): step 2/2. Its pathway is nucleotide-sugar biosynthesis; UDP-N-acetyl-alpha-D-glucosamine biosynthesis; UDP-N-acetyl-alpha-D-glucosamine from N-acetyl-alpha-D-glucosamine 1-phosphate: step 1/1. It functions in the pathway bacterial outer membrane biogenesis; LPS lipid A biosynthesis. Its function is as follows. Catalyzes the last two sequential reactions in the de novo biosynthetic pathway for UDP-N-acetylglucosamine (UDP-GlcNAc). The C-terminal domain catalyzes the transfer of acetyl group from acetyl coenzyme A to glucosamine-1-phosphate (GlcN-1-P) to produce N-acetylglucosamine-1-phosphate (GlcNAc-1-P), which is converted into UDP-GlcNAc by the transfer of uridine 5-monophosphate (from uridine 5-triphosphate), a reaction catalyzed by the N-terminal domain. The chain is Bifunctional protein GlmU from Oceanobacillus iheyensis (strain DSM 14371 / CIP 107618 / JCM 11309 / KCTC 3954 / HTE831).